The sequence spans 406 residues: Succinylornithine transaminase (406 aa).

Residue Lys-252 is modified to N6-(pyridoxal phosphate)lysine.

Belongs to the class-III pyridoxal-phosphate-dependent aminotransferase family. AstC subfamily. Requires pyridoxal 5'-phosphate as cofactor.

The enzyme catalyses N(2)-succinyl-L-ornithine + 2-oxoglutarate = N-succinyl-L-glutamate 5-semialdehyde + L-glutamate. The protein operates within amino-acid degradation; L-arginine degradation via AST pathway; L-glutamate and succinate from L-arginine: step 3/5. Functionally, catalyzes the transamination of N(2)-succinylornithine and alpha-ketoglutarate into N(2)-succinylglutamate semialdehyde and glutamate. Can also act as an acetylornithine aminotransferase. The sequence is that of Succinylornithine transaminase from Escherichia coli O139:H28 (strain E24377A / ETEC).